The primary structure comprises 215 residues: Probable ribosome-binding factor A, chloroplastic (215 aa).

A chloroplast-targeting transit peptide spans 1–52 (MPNLLHTNQSHFFFLHHPPIYTVSSKTQAFHFPQSMAPVNLRTNLSVRRTVR). Positions 183 to 192 (KGSGEGKTEP) are enriched in basic and acidic residues. A disordered region spans residues 183 to 210 (KGSGEGKTEPSDSTEDDQDWEVDDPDED). Positions 194–210 (DSTEDDQDWEVDDPDED) are enriched in acidic residues.

The protein belongs to the RbfA family.

The protein localises to the plastid. The protein resides in the chloroplast. This Arabidopsis thaliana (Mouse-ear cress) protein is Probable ribosome-binding factor A, chloroplastic.